The chain runs to 389 residues: Succinate--CoA ligase [ADP-forming] subunit beta (389 aa).

Residues Lys-9–Lys-246 enclose the ATP-grasp domain. ATP contacts are provided by residues Lys-48, Gly-55–Gly-57, Glu-101, Leu-104, and Glu-109. Residues Asn-201 and Asp-215 each coordinate Mg(2+). Residues Asn-266 and Gly-323–Val-325 contribute to the substrate site.

It belongs to the succinate/malate CoA ligase beta subunit family. As to quaternary structure, heterotetramer of two alpha and two beta subunits. Mg(2+) serves as cofactor.

It catalyses the reaction succinate + ATP + CoA = succinyl-CoA + ADP + phosphate. It carries out the reaction GTP + succinate + CoA = succinyl-CoA + GDP + phosphate. It participates in carbohydrate metabolism; tricarboxylic acid cycle; succinate from succinyl-CoA (ligase route): step 1/1. Functionally, succinyl-CoA synthetase functions in the citric acid cycle (TCA), coupling the hydrolysis of succinyl-CoA to the synthesis of either ATP or GTP and thus represents the only step of substrate-level phosphorylation in the TCA. The beta subunit provides nucleotide specificity of the enzyme and binds the substrate succinate, while the binding sites for coenzyme A and phosphate are found in the alpha subunit. The polypeptide is Succinate--CoA ligase [ADP-forming] subunit beta (Leptospira biflexa serovar Patoc (strain Patoc 1 / Ames)).